Reading from the N-terminus, the 419-residue chain is Putative actin-fragmin kinase DDB_G0279609 (419 aa).

Residues 73–94 (INNNNNSINNNNNNNNKNKNKN) form a disordered region.

Belongs to the protein kinase superfamily. AFK Ser/Thr protein kinase family.

The protein is Putative actin-fragmin kinase DDB_G0279609 of Dictyostelium discoideum (Social amoeba).